A 123-amino-acid chain; its full sequence is Galanin peptides (123 aa).

The first 19 residues, 1–19, serve as a signal peptide directing secretion; that stretch reads MPRGCALLLASLLLASALS. The propeptide occupies 20–30; it reads ATLGLGSPVKE. Alanine amide is present on A61. S116 and S117 each carry phosphoserine.

Belongs to the galanin family.

Its subcellular location is the secreted. Its function is as follows. Endocrine hormone of the central and peripheral nervous systems that binds and activates the G protein-coupled receptors GALR1, GALR2, and GALR3. This small neuropeptide may regulate diverse physiologic functions including contraction of smooth muscle of the gastrointestinal and genitourinary tract, growth hormone and insulin release and adrenal secretion. This is Galanin peptides (GAL) from Sus scrofa (Pig).